The primary structure comprises 158 residues: Transcriptional repressor NrdR (158 aa).

The tract at residues 1–22 (MRCPYCGSEDTQVKDSRPAEDN) is disordered. The segment at 3-34 (CPYCGSEDTQVKDSRPAEDNTSIRRRRICPDC) is a zinc-finger region. Positions 11–22 (TQVKDSRPAEDN) are enriched in basic and acidic residues. Positions 49 to 139 (LMVIKKTGRK…VYRDFSLAED (91 aa)) constitute an ATP-cone domain.

This sequence belongs to the NrdR family. The cofactor is Zn(2+).

Negatively regulates transcription of bacterial ribonucleotide reductase nrd genes and operons by binding to NrdR-boxes. This Rhizobium etli (strain CIAT 652) protein is Transcriptional repressor NrdR.